The following is an 833-amino-acid chain: Ventricular zone-expressed PH domain-containing protein homolog 1 (833 aa).

The interaction with TGFBR1 stretch occupies residues 201 to 319 (TELLALMSQL…TYLVSQLANM (119 aa)). The tract at residues 458 to 505 (KGVGSDDGEDENRGDIPASISLSEIDPLGQGNDKLPFKTDTERSQLGE) is disordered. A compositionally biased stretch (basic and acidic residues) spans 492–502 (LPFKTDTERSQ). Residues 663–833 (ESTFPQQKDL…RESREVTTYL (171 aa)) form an interaction with TGFBR1 region. One can recognise a PH domain in the interval 716-819 (QPLIEGKLKE…WLQCINVAVA (104 aa)).

This sequence belongs to the MELT/VEPH family. In terms of assembly, interacts with TGFBR1.

The protein resides in the cell membrane. Its function is as follows. Interacts with TGF-beta receptor type-1 (TGFBR1) and inhibits dissociation of activated SMAD2 from TGFBR1, impeding its nuclear accumulation and resulting in impaired TGF-beta signaling. May also affect FOXO, Hippo and Wnt signaling. The polypeptide is Ventricular zone-expressed PH domain-containing protein homolog 1 (VEPH1) (Homo sapiens (Human)).